We begin with the raw amino-acid sequence, 629 residues long: ATP-dependent DNA helicase II subunit 2 (629 aa).

A Ku domain is found at 254–476 (SGLNRKTAVE…GHQIDELMEQ (223 aa)). A compositionally biased stretch (basic and acidic residues) spans 608 to 620 (DLETLLKRGEQHS). Positions 608–629 (DLETLLKRGEQHSRGSPNNSNN) are disordered.

Belongs to the ku80 family. In terms of assembly, heterodimer of YKU70/HDF1 and YKU80/HDF2. Interacts with SIR4.

Its subcellular location is the nucleus. The protein resides in the chromosome. It localises to the telomere. It carries out the reaction ATP + H2O = ADP + phosphate + H(+). Functionally, single-stranded DNA-dependent ATP-dependent helicase. Involved in non-homologous end joining (NHEJ) DNA double strand break repair. DNA-binding is sequence-independent but has a high affinity to nicks in double-stranded DNA and to the ends of duplex DNA. Binds to naturally occurring chromosomal ends, and therefore provides chromosomal end protection. Appears to have a role in recruitment of telomerase and CDC13 to the telomere and the subsequent telomere elongation. Required also for telomere recombination to repair telomeric ends in the absence of telomerase. KU70, of the KU70/KU80 heterodimer, binds to the stem loop of TLC1, the RNA component of telomerase. Involved in telomere maintenance. Interacts with telomeric repeats and subtelomeric sequences thereby controlling telomere length and protecting against subtelomeric rearrangement. Maintains telomeric chromatin, which is involved in silencing the expression of genes located at the telomere. Required for mating-type switching. The chain is ATP-dependent DNA helicase II subunit 2 (YKU80) from Saccharomyces cerevisiae (strain ATCC 204508 / S288c) (Baker's yeast).